We begin with the raw amino-acid sequence, 938 residues long: Protein O-mannosyl-transferase Tmtc2 (938 aa).

Position 1 (methionine 1) is a topological domain, cytoplasmic. A helical membrane pass occupies residues 2-22 (PSLEPWLWGDSCSWLGMLAML). Residues 23 to 34 (RLRLHKSNMDFT) lie on the Extracellular side of the membrane. Residues 35–55 (CLFCCSLAFVLYLNTLGAGFV) form a helical membrane-spanning segment. The Cytoplasmic portion of the chain corresponds to 56 to 108 (YDDRRAILANADVSGGTPWQRSFSNDFWGTPLTDSGSHGSWRPLCVLSFRLNY). The chain crosses the membrane as a helical span at residues 109–129 (LIGGGFAPWGFHLVNNLLHCV). Over 130-139 (ATALVVRVAR) the chain is Extracellular. A helical membrane pass occupies residues 140–160 (TLLASVWAVLAAGALFAAHPI). Topologically, residues 161 to 164 (HTEA) are cytoplasmic. Residues 165 to 185 (VAGVVGRADLAACVCYLLTYL) traverse the membrane as a helical segment. Over 186–208 (SYLRHMRWRESGDPRQWLALGAT) the chain is Extracellular. Residues 209–229 (LILAAAGLLCKETAITALLVC) traverse the membrane as a helical segment. Residues 230 to 249 (ALFDVMRGLSGQVDKQRLRS) are Cytoplasmic-facing. Residues 250-270 (VCIVLGALFCMAYCRLVIVPG) form a helical membrane-spanning segment. Residues 271–291 (PQTAFSSADNPIARTPSAWTR) are Extracellular-facing. The chain crosses the membrane as a helical span at residues 292-312 (LLTFLYLPVFNLRLLLQPNVL). Over 313-510 (SFDWGMDALP…HACVLIMSLS (198 aa)) the chain is Cytoplasmic. A disordered region spans residues 450 to 480 (RSSSSCSNSTNSSSSSSSSSSSSSSSSSSLS). The chain crosses the membrane as a helical span at residues 511–531 (FLALPFLPASNLLFYVGFVVA). Residues 532–533 (ER) lie on the Extracellular side of the membrane. A helical transmembrane segment spans residues 534–554 (LLYLPSVGFCLLVGYGVSKLM). Topologically, residues 555-562 (SCNQRTRN) are cytoplasmic. Residues 563–580 (ILLLSFSLLLAAMSLRTL) form a helical membrane-spanning segment. Over 581-938 (RRNADWRDEE…NLAKLGVTNV (358 aa)) the chain is Extracellular. TPR repeat units lie at residues 602–635 (PKAL…RPNM), 636–669 (ADVH…RPNL), 670–703 (AVAY…DGAA), 715–748 (SSAY…LPGL), 753–786 (EILY…QPNQ), 788–821 (AAHL…APEQ), 822–855 (ASVY…APND), 856–889 (YTLV…RPGD), and 890–923 (AHAH…QPGD). Asparagine 800 carries N-linked (GlcNAc...) asparagine glycosylation.

It belongs to the TMTC family.

It localises to the membrane. The protein resides in the endoplasmic reticulum. The enzyme catalyses a di-trans,poly-cis-dolichyl beta-D-mannosyl phosphate + L-seryl-[protein] = 3-O-(alpha-D-mannosyl)-L-seryl-[protein] + a di-trans,poly-cis-dolichyl phosphate + H(+). The catalysed reaction is a di-trans,poly-cis-dolichyl beta-D-mannosyl phosphate + L-threonyl-[protein] = 3-O-(alpha-D-mannosyl)-L-threonyl-[protein] + a di-trans,poly-cis-dolichyl phosphate + H(+). It functions in the pathway protein modification; protein glycosylation. Its function is as follows. Transfers mannosyl residues to the hydroxyl group of serine or threonine residues. This is Protein O-mannosyl-transferase Tmtc2 from Drosophila melanogaster (Fruit fly).